A 404-amino-acid polypeptide reads, in one-letter code: Cysteine desulfurase IscS (404 aa).

Pyridoxal 5'-phosphate-binding positions include 75–76 (AT), N155, Q183, and 203–205 (SGH). An N6-(pyridoxal phosphate)lysine modification is found at K206. Pyridoxal 5'-phosphate is bound at residue T243. The active-site Cysteine persulfide intermediate is C328. C328 contacts [2Fe-2S] cluster.

It belongs to the class-V pyridoxal-phosphate-dependent aminotransferase family. NifS/IscS subfamily. As to quaternary structure, homodimer. Forms a heterotetramer with IscU, interacts with other sulfur acceptors. Pyridoxal 5'-phosphate serves as cofactor.

The protein resides in the cytoplasm. It catalyses the reaction (sulfur carrier)-H + L-cysteine = (sulfur carrier)-SH + L-alanine. It participates in cofactor biosynthesis; iron-sulfur cluster biosynthesis. Its function is as follows. Master enzyme that delivers sulfur to a number of partners involved in Fe-S cluster assembly, tRNA modification or cofactor biosynthesis. Catalyzes the removal of elemental sulfur atoms from cysteine to produce alanine. Functions as a sulfur delivery protein for Fe-S cluster synthesis onto IscU, an Fe-S scaffold assembly protein, as well as other S acceptor proteins. The polypeptide is Cysteine desulfurase IscS (Shewanella denitrificans (strain OS217 / ATCC BAA-1090 / DSM 15013)).